The sequence spans 355 residues: Putative inositol monophosphatase 3 (355 aa).

The helical transmembrane segment at 16–36 (VPATIFAILLTIVLVYFLNFH) threads the bilayer. Mg(2+) contacts are provided by Glu-127, Asp-167, Leu-169, Asp-170, and Asp-292. Glu-127 contacts substrate. Substrate contacts are provided by residues 169–172 (LDAT) and Asp-292.

This sequence belongs to the inositol monophosphatase superfamily. The cofactor is Mg(2+).

It is found in the membrane. It carries out the reaction a myo-inositol phosphate + H2O = myo-inositol + phosphate. It participates in polyol metabolism; myo-inositol biosynthesis; myo-inositol from D-glucose 6-phosphate: step 2/2. The protein is Putative inositol monophosphatase 3 of Drosophila pseudoobscura pseudoobscura (Fruit fly).